The following is a 411-amino-acid chain: Fructose-1,6-bisphosphatase, chloroplastic (411 aa).

The transit peptide at 1 to 53 (MAATAGATPSSHLLLSSSRHVAASPQPRILFPSLSGKRVAVGKNHHATGVRCM) directs the protein to the chloroplast. Residues E133, E162, D183, L185, and D186 each coordinate Mg(2+). 186-189 (DGSS) contacts substrate. C227 and C232 are joined by a disulfide. N291, Y323, Y341, Y343, and K353 together coordinate substrate. Mg(2+) is bound at residue E359.

Belongs to the FBPase class 1 family. As to quaternary structure, homotetramer. The cofactor is Mg(2+).

The protein localises to the plastid. The protein resides in the chloroplast stroma. It catalyses the reaction beta-D-fructose 1,6-bisphosphate + H2O = beta-D-fructose 6-phosphate + phosphate. The protein operates within carbohydrate biosynthesis; Calvin cycle. In Brassica napus (Rape), this protein is Fructose-1,6-bisphosphatase, chloroplastic (FBP).